A 420-amino-acid polypeptide reads, in one-letter code: Napsin-A (420 aa).

Positions 1 to 25 (MSPPPLLQPLLLLLPLLNVEPSGAT) are cleaved as a signal peptide. A propeptide spans 26-63 (LIRIPLHRVQPGRRILNLLRGWREPAELPKLGAPSPGD) (activation peptide). One can recognise a Peptidase A1 domain in the interval 78 to 399 (YFGEIGLGTP…MKSSARVGLA (322 aa)). A glycan (N-linked (GlcNAc...) asparagine) is linked at asparagine 90. Aspartate 96 is a catalytic residue. A disulfide bridge links cysteine 109 with cysteine 116. Residue asparagine 133 is glycosylated (N-linked (GlcNAc...) asparagine). Cysteine 274 and cysteine 278 are joined by a disulfide. The active site involves aspartate 283. Cysteine 317 and cysteine 354 are oxidised to a cystine. The N-linked (GlcNAc...) asparagine glycan is linked to asparagine 336.

The protein belongs to the peptidase A1 family. As to expression, expressed predominantly in adult lung (type II pneumocytes) and kidney and in fetal lung. Low levels in adult spleen and very low levels in peripheral blood leukocytes.

It is found in the secreted. Functionally, may be involved in processing of pneumocyte surfactant precursors. The polypeptide is Napsin-A (NAPSA) (Homo sapiens (Human)).